A 503-amino-acid polypeptide reads, in one-letter code: MDFSIKGCDWSKGEAKGFLTGKSDCIVLGIFEAQTLSGAALDIDTATKGLISRVVKAGDMDGKRGKTLFLHEVSGIGASRVLLVGLGKQDAFNQKAYTDAVTAAWRALLSTKIVQVTFTLAQLPVDERSSDWGVRAAILALRNETYRFTQMKSKPEPASHTLKRVVFSVDPVDEKAAKLAVKQAVALANGMDLTRDLGNLPGNVCTPTYLGNTAKKIAKDWGLKAEVLGLKQIQALNMGSFLSVARASVEPPQFIVLHYQGAAAKAAPVVLVGKGITFDTGGISLKPGEAMDEMKYDMCGAGSVLGTMRAVAEMGLKINVVAIVPTCENMPGGNATKPGDIVTSMKGLTIEVLNTDAEGRLILCDALTYAERFKPAAVIDVATLTGACVIALGTHNSGLFSKDDALAGELLDASREANDPAWRMPLDDEYQDQLKSNFADIANIGGRPAGAVTAACFLSRFTDSYPWAHLDIAGTAWKGGAAKGATGRPVPLLAQFLIDRAGQ.

Positions 274 and 279 each coordinate Mn(2+). The active site involves Lys-286. Residues Asp-297, Asp-356, and Glu-358 each contribute to the Mn(2+) site. Residue Arg-360 is part of the active site.

This sequence belongs to the peptidase M17 family. Mn(2+) serves as cofactor.

The protein resides in the cytoplasm. The catalysed reaction is Release of an N-terminal amino acid, Xaa-|-Yaa-, in which Xaa is preferably Leu, but may be other amino acids including Pro although not Arg or Lys, and Yaa may be Pro. Amino acid amides and methyl esters are also readily hydrolyzed, but rates on arylamides are exceedingly low.. The enzyme catalyses Release of an N-terminal amino acid, preferentially leucine, but not glutamic or aspartic acids.. Functionally, presumably involved in the processing and regular turnover of intracellular proteins. Catalyzes the removal of unsubstituted N-terminal amino acids from various peptides. The sequence is that of Probable cytosol aminopeptidase from Burkholderia ambifaria (strain ATCC BAA-244 / DSM 16087 / CCUG 44356 / LMG 19182 / AMMD) (Burkholderia cepacia (strain AMMD)).